The sequence spans 156 residues: MPRRRVVGQRKILPDPKFGSELLAKFVNVVMVDGKKSVSEAIVYGALDIIATKTGKEHLAVFEEALDNIRPAVEVKSRRVGGATYQVPVEVRPVRRNALAMRWLVDAARKRGEKSMAQRLAGELLDAADNKGSSVKKREDVHRMAEANKAFAHFRW.

Belongs to the universal ribosomal protein uS7 family. As to quaternary structure, part of the 30S ribosomal subunit. Contacts proteins S9 and S11.

Functionally, one of the primary rRNA binding proteins, it binds directly to 16S rRNA where it nucleates assembly of the head domain of the 30S subunit. Is located at the subunit interface close to the decoding center, probably blocks exit of the E-site tRNA. The sequence is that of Small ribosomal subunit protein uS7 from Aeromonas hydrophila subsp. hydrophila (strain ATCC 7966 / DSM 30187 / BCRC 13018 / CCUG 14551 / JCM 1027 / KCTC 2358 / NCIMB 9240 / NCTC 8049).